The sequence spans 299 residues: NmrA-like family domain-containing protein 1 (299 aa).

Residues 11–16 (GGTGAQ), 37–41 (RNPRK), 58–59 (DQ), Q62, 79–81 (TNY), K92, K133, and 155–158 (YFEN) contribute to the NADP(+) site. The interaction with ASS1 stretch occupies residues 153-189 (PCYFENLLSHFLPQKAPDGKSYLLSLPTGDVPMDGMS).

The protein belongs to the NmrA-type oxidoreductase family. Homodimer. Interacts with ASS1. Interaction is enhanced by low NADPH/NADP(+) ratios, which results in inhibition of ASS1 activity.

Its subcellular location is the cytoplasm. It localises to the perinuclear region. The protein localises to the nucleus. In terms of biological role, redox sensor protein. Undergoes restructuring and subcellular redistribution in response to changes in intracellular NADPH/NADP(+) levels. At low NADPH concentrations the protein is found mainly as a monomer, and binds argininosuccinate synthase (ASS1), the enzyme involved in nitric oxide synthesis. Association with ASS1 impairs its activity and reduces the production of nitric oxide, which subsecuently prevents apoptosis. Under normal NADPH concentrations, the protein is found as a dimer and hides the binding site for ASS1. The homodimer binds one molecule of NADPH. Has higher affinity for NADPH than for NADP(+). Binding to NADPH is necessary to form a stable dimer. The sequence is that of NmrA-like family domain-containing protein 1 (NMRAL1) from Homo sapiens (Human).